Here is a 187-residue protein sequence, read N- to C-terminus: Protein GrpE (187 aa).

A disordered region spans residues 1-23 (MADEQNLDAQAQDQAAEAGAGEE). Positions 7–23 (LDAQAQDQAAEAGAGEE) are enriched in low complexity.

The protein belongs to the GrpE family. Homodimer.

The protein localises to the cytoplasm. Its function is as follows. Participates actively in the response to hyperosmotic and heat shock by preventing the aggregation of stress-denatured proteins, in association with DnaK and GrpE. It is the nucleotide exchange factor for DnaK and may function as a thermosensor. Unfolded proteins bind initially to DnaJ; upon interaction with the DnaJ-bound protein, DnaK hydrolyzes its bound ATP, resulting in the formation of a stable complex. GrpE releases ADP from DnaK; ATP binding to DnaK triggers the release of the substrate protein, thus completing the reaction cycle. Several rounds of ATP-dependent interactions between DnaJ, DnaK and GrpE are required for fully efficient folding. The sequence is that of Protein GrpE from Pseudomonas savastanoi pv. phaseolicola (strain 1448A / Race 6) (Pseudomonas syringae pv. phaseolicola (strain 1448A / Race 6)).